Here is a 484-residue protein sequence, read N- to C-terminus: tRNA sulfurtransferase (484 aa).

Residues 63–167 (ERLVEALKCI…NKDLFIVTQR (105 aa)) form the THUMP domain. ATP contacts are provided by residues 185 to 186 (LM), lysine 267, glycine 289, and glutamine 298. Cysteine 346 and cysteine 458 are joined by a disulfide. The 79-residue stretch at 406-484 (IPENAVVVDI…GFKNVKVYRP (79 aa)) folds into the Rhodanese domain. The active-site Cysteine persulfide intermediate is cysteine 458.

The protein belongs to the ThiI family.

The protein localises to the cytoplasm. The enzyme catalyses [ThiI sulfur-carrier protein]-S-sulfanyl-L-cysteine + a uridine in tRNA + 2 reduced [2Fe-2S]-[ferredoxin] + ATP + H(+) = [ThiI sulfur-carrier protein]-L-cysteine + a 4-thiouridine in tRNA + 2 oxidized [2Fe-2S]-[ferredoxin] + AMP + diphosphate. It carries out the reaction [ThiS sulfur-carrier protein]-C-terminal Gly-Gly-AMP + S-sulfanyl-L-cysteinyl-[cysteine desulfurase] + AH2 = [ThiS sulfur-carrier protein]-C-terminal-Gly-aminoethanethioate + L-cysteinyl-[cysteine desulfurase] + A + AMP + 2 H(+). It participates in cofactor biosynthesis; thiamine diphosphate biosynthesis. In terms of biological role, catalyzes the ATP-dependent transfer of a sulfur to tRNA to produce 4-thiouridine in position 8 of tRNAs, which functions as a near-UV photosensor. Also catalyzes the transfer of sulfur to the sulfur carrier protein ThiS, forming ThiS-thiocarboxylate. This is a step in the synthesis of thiazole, in the thiamine biosynthesis pathway. The sulfur is donated as persulfide by IscS. This Colwellia psychrerythraea (strain 34H / ATCC BAA-681) (Vibrio psychroerythus) protein is tRNA sulfurtransferase.